The chain runs to 184 residues: MPLVRYRKVAILGYRSVGKTSLAHQFVEGEFLEGYDPTVENTYSKTVTLGKDEFHLHLVDTAGQDEYSILPYSLIIGVHGYVLVYSVNSLRSFQIVKNLYQKLHEGHGKTRLSVLLVGNKADLSPEREVQAVEGKKLAESWGAMFMESSARDNQLTQDVFIKVIQEIARVENSYGRQDRRCYLM.

Residues 16–21 (SVGKTS), 32–38 (LEGYDPT), Gly63, 119–122 (NKAD), and 149–150 (SA) contribute to the GTP site. The Effector region motif lies at 35 to 43 (YDPTVENTY). Thr38 lines the Mg(2+) pocket. Cys181 carries the cysteine methyl ester modification. Cys181 carries the S-farnesyl cysteine lipid modification. The propeptide at 182–184 (YLM) is removed in mature form.

Belongs to the small GTPase superfamily. Rheb family. In terms of assembly, interacts with MTOR.

Its subcellular location is the endomembrane system. It is found in the cytoplasm. The catalysed reaction is GTP + H2O = GDP + phosphate + H(+). Its function is as follows. Binds GTP and exhibits intrinsic GTPase activity. May activate NF-kappa-B-mediated gene transcription. Promotes signal transduction through MTOR, activates RPS6KB1, and is a downstream target of the small GTPase-activating proteins TSC1 and TSC2. This is GTPase RhebL1 (Rhebl1) from Mus musculus (Mouse).